The chain runs to 141 residues: Hemoglobin subunit alpha (141 aa).

Residues 1 to 141 (VLSSTDKSNV…VSTVLTSKYR (141 aa)) form the Globin domain. Ser3 bears the Phosphoserine mark. 2 positions are modified to N6-succinyllysine: Lys7 and Lys11. Residue Lys16 is modified to N6-acetyllysine; alternate. The residue at position 16 (Lys16) is an N6-succinyllysine; alternate. Tyr24 bears the Phosphotyrosine mark. Ser35 bears the Phosphoserine mark. At Lys40 the chain carries N6-succinyllysine. His58 is an O2 binding site. His87 contacts heme b. At Ser102 the chain carries Phosphoserine. Residue Thr108 is modified to Phosphothreonine. 2 positions are modified to phosphoserine: Ser124 and Ser131. 2 positions are modified to phosphothreonine: Thr134 and Thr137. Position 138 is a phosphoserine (Ser138).

It belongs to the globin family. Heterotetramer of two alpha chains and two beta chains. Red blood cells.

Its function is as follows. Involved in oxygen transport from the lung to the various peripheral tissues. Hemopressin acts as an antagonist peptide of the cannabinoid receptor CNR1. Hemopressin-binding efficiently blocks cannabinoid receptor CNR1 and subsequent signaling. The sequence is that of Hemoglobin subunit alpha (HBA) from Pteropus alecto (Black flying fox).